A 578-amino-acid polypeptide reads, in one-letter code: Putative transporter B0361.11 (578 aa).

The disordered stretch occupies residues 1-30 (MSISRRSYEQFDEMKSENQENNSKKKSSER). 11 helical membrane-spanning segments follow: residues 51–71 (IFTY…MYIM), 148–168 (FGLT…SMLA), 182–202 (ILAF…IFLI), 232–252 (AWIT…TLLV), 263–283 (YFIV…LPES), 339–359 (IWLL…YFAI), 373–393 (AFLY…PLMM), 399–419 (MIVI…TVFL), 426–446 (LVIM…HPIW), 457–477 (SLCF…SPYV), and 486–506 (WIPF…AFML). Residues 532–550 (AYRRSKSSSSSVSALSKTS) show a composition bias toward low complexity. Positions 532-561 (AYRRSKSSSSSVSALSKTSVRSKKTLSSES) are disordered.

The protein belongs to the major facilitator superfamily. Sugar transporter (TC 2.A.1.1) family.

The protein localises to the membrane. The chain is Putative transporter B0361.11 from Caenorhabditis elegans.